A 1335-amino-acid polypeptide reads, in one-letter code: Xanthine dehydrogenase/oxidase (1335 aa).

Residues 7 to 94 (DELVFFVNGK…HVAVTTVEGI (88 aa)) enclose the 2Fe-2S ferredoxin-type domain. [2Fe-2S] cluster is bound by residues C46, C51, C54, C76, C115, C118, C150, and C152. Residues 231–416 (FEGERVTWIQ…VSIVIPYSRK (186 aa)) enclose the FAD-binding PCMH-type domain. Residues 259-266 (LVVGNTEI), F339, 349-353 (SIGGN), D362, L406, and K424 contribute to the FAD site. A disulfide bridge links C538 with C995. Q770 and F801 together coordinate Mo-molybdopterin. Substrate contacts are provided by E805 and R883. R915 serves as a coordination point for Mo-molybdopterin. Positions 917 and 1013 each coordinate substrate. Position 1082 (A1082) interacts with Mo-molybdopterin. E1264 serves as the catalytic Proton acceptor.

Belongs to the xanthine dehydrogenase family. As to quaternary structure, homodimer. Interacts with BTN1A1. The cofactor is FAD. Mo-molybdopterin serves as cofactor. [2Fe-2S] cluster is required as a cofactor. In terms of processing, subject to partial proteolysis; this alters the enzyme from the dehydrogenase form (D) to the oxidase form (O). Contains sulfhydryl groups that are easily oxidized (in vitro); this alters the enzyme from the dehydrogenase form (D) to the oxidase form (O).

The protein resides in the cytoplasm. It is found in the peroxisome. Its subcellular location is the secreted. The catalysed reaction is xanthine + NAD(+) + H2O = urate + NADH + H(+). It carries out the reaction hypoxanthine + NAD(+) + H2O = xanthine + NADH + H(+). The enzyme catalyses xanthine + O2 + H2O = urate + H2O2. Can be converted from the dehydrogenase form (D) to the oxidase form (O) irreversibly by proteolysis or reversibly through the oxidation of sulfhydryl groups. Key enzyme in purine degradation. Catalyzes the oxidation of hypoxanthine to xanthine. Catalyzes the oxidation of xanthine to uric acid. Contributes to the generation of reactive oxygen species. The protein is Xanthine dehydrogenase/oxidase (Xdh) of Mus musculus (Mouse).